The chain runs to 212 residues: Transcription antitermination protein NusB (212 aa).

Belongs to the NusB family.

Involved in transcription antitermination. Required for transcription of ribosomal RNA (rRNA) genes. Binds specifically to the boxA antiterminator sequence of the ribosomal RNA (rrn) operons. This is Transcription antitermination protein NusB from Gloeothece citriformis (strain PCC 7424) (Cyanothece sp. (strain PCC 7424)).